Here is a 626-residue protein sequence, read N- to C-terminus: MCSTLKKCGTYRTEVAECHDHGSTFQGRKKGGSSFRDNFDKRSCHYEHGGYERPPSHCQENDGSVEMRDVHKDQQLRHTPYSIRCERRMKWHSEDEIRITTWRNRKPPERKMSQNTQDGYTRNWFKVTIPYGIKYDKAWLMNSIQSHCSDRFTPVDFHYVRNRACFFVQDASAASALKDVSYKIYDDENQKICIFVNHSTAPYSVKNKLKPGQMEMLKLTMNKRYNVSQQALDLQNLRFDPDLMGRDIDIILNRRNCMAATLKIIERNFPELLSLNLCNNKLYQLDGLSDITEKAPKVKTLNLSKNKLESAWELGKVKGLKLEELWLEGNPLCSTFSDQSAYVSAIRDCFPKLLRLDGRELSAPVIVDIDSSETMKPCKENFTGSETLKHLVLQFLQQYYSIYDSGDRQGLLGAYHDEACFSLAIPFDPKDSAPSSLCKYFEDSRNMKTLKDPYLKGELLRRTKRDIVDSLSALPKTQHDLSSILVDVWCQTERMLCFSVNGVFKEVEGQSQGSVLAFTRTFIATPGSSSSLCIVNDELFVRDASPQETQSAFSIPVSTLSSSSEPSLSQEQQEMVQAFSAQSGMKLEWSQKCLQDNEWNYTRAGQAFTMLQTEGKIPAEAFKQIS.

The residue at position 34 (Ser-34) is a Phosphoserine. Positions 124–203 (WFKVTIPYGI…IFVNHSTAPY (80 aa)) constitute an RRM domain. LRR repeat units follow at residues 271 to 296 (ELLSLNLCNNKLYQLDGLSDITEKAP), 297 to 320 (KVKTLNLSKNKLESAWELGKVKGL), 321 to 348 (KLEELWLEGNPLCSTFSDQSAYVSAIRD), and 349 to 376 (CFPKLLRLDGRELSAPVIVDIDSSETMK). The NTF2 domain occupies 391 to 541 (LVLQFLQQYY…LCIVNDELFV (151 aa)). One can recognise a TAP-C domain in the interval 570-625 (QEQQEMVQAFSAQSGMKLEWSQKCLQDNEWNYTRAGQAFTMLQTEGKIPAEAFKQI).

It belongs to the NXF family. Interacts with NXT1, NXT2, E1B-AP5, the REF proteins and with nucleoporins, Nup62, Nup153 and Nup214. Interacts with LUZP4. As to expression, expressed almost exclusively in testis. Also expressed in several cancers.

It localises to the nucleus. It is found in the nucleoplasm. Its subcellular location is the cytoplasm. Functionally, involved in the export of mRNA from the nucleus to the cytoplasm. This Homo sapiens (Human) protein is Nuclear RNA export factor 2 (NXF2).